Consider the following 188-residue polypeptide: Ribosome maturation factor RimM (188 aa).

Residues 112 to 187 (SDSYYWVDLI…LLTLDWQSDW (76 aa)) enclose the PRC barrel domain.

This sequence belongs to the RimM family. In terms of assembly, binds ribosomal protein uS19.

The protein localises to the cytoplasm. An accessory protein needed during the final step in the assembly of 30S ribosomal subunit, possibly for assembly of the head region. Essential for efficient processing of 16S rRNA. May be needed both before and after RbfA during the maturation of 16S rRNA. It has affinity for free ribosomal 30S subunits but not for 70S ribosomes. The protein is Ribosome maturation factor RimM of Polynucleobacter asymbioticus (strain DSM 18221 / CIP 109841 / QLW-P1DMWA-1) (Polynucleobacter necessarius subsp. asymbioticus).